The sequence spans 637 residues: ATP-dependent zinc metalloprotease FtsH (637 aa).

Residues 1-7 are Cytoplasmic-facing; that stretch reads MNRVFRN. The helical transmembrane segment at 8–28 threads the bilayer; that stretch reads TIFYLLILLVVIGVVSYFQTS. The Extracellular portion of the chain corresponds to 29–109; it reads NPKTENMSYS…VEPAQETSGW (81 aa). A helical transmembrane segment spans residues 110–130; sequence VTFLTTIIPFVIIFILFFFLL. The Cytoplasmic segment spans residues 131-637; it reads NQAQGGGSRV…TEEKKDDTKE (507 aa). An ATP-binding site is contributed by 201-208; it reads GPPGTGKT. His423 serves as a coordination point for Zn(2+). Residue Glu424 is part of the active site. Zn(2+)-binding residues include His427 and Asp499. The tract at residues 514–637 is not necessary for FtsH function; sequence FGMSEKLGPL…TEEKKDDTKE (124 aa).

This sequence in the central section; belongs to the AAA ATPase family. In the C-terminal section; belongs to the peptidase M41 family. As to quaternary structure, homohexamer. Interacts with FloT at midcell. Interacts with FloA at midcell. Another study shows only minor colocalization with FloA or FloT. It depends on Zn(2+) as a cofactor.

It localises to the cell membrane. The protein localises to the membrane raft. Functionally, acts as a processive, ATP-dependent zinc metallopeptidase for both cytoplasmic and membrane proteins. Plays a role in the quality control of integral membrane proteins. In vitro partially degrades Spo0E, the phosphatase that acts on Spo0A-P. Recognition requires the last 14 residues of Spo0E. Its stabile accumulation requires FlotA and Flot. May degrade EzrA. This chain is ATP-dependent zinc metalloprotease FtsH, found in Bacillus subtilis (strain 168).